A 63-amino-acid chain; its full sequence is uncharacterized protein (63 aa).

The N-terminal stretch at 1 to 15 (MRNPVVWGMIYFAVG) is a signal peptide. The N-palmitoyl cysteine moiety is linked to residue C16. The S-diacylglycerol cysteine moiety is linked to residue C16. Residues 34–56 (SILLMVFAAYNISISFKMFAFSF) form a helical membrane-spanning segment.

It is found in the cell membrane. This is an uncharacterized protein from Bacillus subtilis (strain 168).